A 218-amino-acid chain; its full sequence is Kynurenine formamidase (218 aa).

Position 27 (Trp-27) interacts with substrate. The Zn(2+) site is built by His-57, His-61, and Asp-63. The Proton donor/acceptor role is filled by His-67. Zn(2+) is bound by residues His-169 and Glu-181.

The protein belongs to the Cyclase 1 superfamily. KynB family. Homodimer. Requires Zn(2+) as cofactor.

It catalyses the reaction N-formyl-L-kynurenine + H2O = L-kynurenine + formate + H(+). It functions in the pathway amino-acid degradation; L-tryptophan degradation via kynurenine pathway; L-kynurenine from L-tryptophan: step 2/2. With respect to regulation, inhibited by EDTA. Insensitive to phenylmethylsulfonyl fluoride (PMSF). Its function is as follows. Catalyzes the hydrolysis of N-formyl-L-kynurenine to L-kynurenine, the second step in the kynurenine pathway of tryptophan degradation. The polypeptide is Kynurenine formamidase (Cupriavidus metallidurans (strain ATCC 43123 / DSM 2839 / NBRC 102507 / CH34) (Ralstonia metallidurans)).